Here is a 70-residue protein sequence, read N- to C-terminus: Translational regulator CsrA (70 aa).

This sequence belongs to the CsrA/RsmA family. As to quaternary structure, homodimer; the beta-strands of each monomer intercalate to form a hydrophobic core, while the alpha-helices form wings that extend away from the core.

It localises to the cytoplasm. In terms of biological role, a key translational regulator that binds mRNA to regulate translation initiation and/or mRNA stability. Mediates global changes in gene expression, shifting from rapid growth to stress survival by linking envelope stress, the stringent response and the catabolite repression systems. Usually binds in the 5'-UTR; binding at or near the Shine-Dalgarno sequence prevents ribosome-binding, repressing translation, binding elsewhere in the 5'-UTR can activate translation and/or stabilize the mRNA. Its function is antagonized by small RNA(s). The polypeptide is Translational regulator CsrA (Hydrogenovibrio crunogenus (strain DSM 25203 / XCL-2) (Thiomicrospira crunogena)).